The following is a 657-amino-acid chain: KNR4/SMI1 homolog (657 aa).

Disordered regions lie at residues 168 to 193 (EQQQ…QKGY), 366 to 402 (SSSV…ESVS), and 416 to 657 (LTQT…TVAL). Residues 174–187 (KSSSELPQTVTPQA) are compositionally biased toward polar residues. Over residues 416 to 436 (LTQTDASSKGTTKPATPNPMT) the composition is skewed to polar residues. 2 stretches are compositionally biased toward low complexity: residues 444 to 455 (STPGSPSAAAEA) and 473 to 482 (TPTVTKESTP). Basic and acidic residues predominate over residues 492–504 (LDSKNTETNEDTR). Positions 505–521 (ATNTAHSMAPTVSSAIT) are enriched in polar residues. Basic and acidic residues-rich tracts occupy residues 535–561 (KPKD…KANE), 569–604 (VEPK…EKKV), and 627–650 (KSDK…KLNE).

The protein belongs to the KNR4/SMI1 family.

In Eremothecium gossypii (strain ATCC 10895 / CBS 109.51 / FGSC 9923 / NRRL Y-1056) (Yeast), this protein is KNR4/SMI1 homolog.